A 276-amino-acid chain; its full sequence is F420-dependent methylenetetrahydromethanopterin dehydrogenase (276 aa).

The protein belongs to the MTD family.

It catalyses the reaction 5,10-methylenetetrahydromethanopterin + oxidized coenzyme F420-(gamma-L-Glu)(n) + 2 H(+) = 5,10-methenyl-5,6,7,8-tetrahydromethanopterin + reduced coenzyme F420-(gamma-L-Glu)(n). Catalyzes the oxidation of methylene-H(4)MPT to methenyl-H(4)MPT(+). The chain is F420-dependent methylenetetrahydromethanopterin dehydrogenase from Methanosphaera stadtmanae (strain ATCC 43021 / DSM 3091 / JCM 11832 / MCB-3).